Consider the following 400-residue polypeptide: Nicotinate phosphoribosyltransferase (400 aa).

His220 carries the phosphohistidine; by autocatalysis modification.

It belongs to the NAPRTase family. Transiently phosphorylated on a His residue during the reaction cycle. Phosphorylation strongly increases the affinity for substrates and increases the rate of nicotinate D-ribonucleotide production. Dephosphorylation regenerates the low-affinity form of the enzyme, leading to product release.

It carries out the reaction nicotinate + 5-phospho-alpha-D-ribose 1-diphosphate + ATP + H2O = nicotinate beta-D-ribonucleotide + ADP + phosphate + diphosphate. It participates in cofactor biosynthesis; NAD(+) biosynthesis; nicotinate D-ribonucleotide from nicotinate: step 1/1. Its function is as follows. Catalyzes the synthesis of beta-nicotinate D-ribonucleotide from nicotinate and 5-phospho-D-ribose 1-phosphate at the expense of ATP. The polypeptide is Nicotinate phosphoribosyltransferase (Escherichia coli O17:K52:H18 (strain UMN026 / ExPEC)).